Here is a 185-residue protein sequence, read N- to C-terminus: Peptide deformylase (185 aa).

Cys-112 and His-155 together coordinate Fe cation. Glu-156 is an active-site residue. His-159 is a Fe cation binding site.

It belongs to the polypeptide deformylase family. It depends on Fe(2+) as a cofactor.

It catalyses the reaction N-terminal N-formyl-L-methionyl-[peptide] + H2O = N-terminal L-methionyl-[peptide] + formate. Its function is as follows. Removes the formyl group from the N-terminal Met of newly synthesized proteins. Requires at least a dipeptide for an efficient rate of reaction. N-terminal L-methionine is a prerequisite for activity but the enzyme has broad specificity at other positions. This chain is Peptide deformylase, found in Latilactobacillus sakei subsp. sakei (strain 23K) (Lactobacillus sakei subsp. sakei).